Reading from the N-terminus, the 241-residue chain is Beta-casein (241 aa).

The N-terminal stretch at 1 to 15 is a signal peptide; it reads MKILILACLVALALA. The tract at residues 21-45 is disordered; the sequence is LNVSSETVESLSSNEPDSSSEESIT. Phosphoserine; in form 4-P, form 5-P, form 6-P and form 7-P is present on Ser24. A Phosphoserine; in form 7-P modification is found at Ser25. At Thr27 the chain carries Phosphothreonine; in form 6-P and form 7-P. Phosphoserine occurs at positions 30 and 32. A Phosphoserine; in form 5-P, form 6-P and form 7-P modification is found at Ser33. Phosphoserine; in form 4-P, form 5-P, form 6-P and form 7-P is present on residues Ser38, Ser39, and Ser40. Asn150 bears the Deamidated asparagine mark.

Belongs to the beta-casein family. In terms of processing, there are at least five different forms found in milk, with varying degrees of phosphorylation. These include form 3-P which is phosphorylated at three sites that have not been determined, this form is present in very low amounts, form 4-P which is phosphorylated at four sites, form 5-P which is phosphorylated at five sites, form 6-P which is phosphorylated at six sites, and form 7-P which is phosphorylated at seven sites. Spontaneous deamidation of Asn-150 produces aspartate or isoaspartate. As to expression, mammary gland specific. Secreted in milk.

It is found in the secreted. In terms of biological role, important role in determination of the surface properties of the casein micelles. This Equus caballus (Horse) protein is Beta-casein.